A 420-amino-acid chain; its full sequence is Interleukin-5 receptor subunit alpha (420 aa).

Positions 1 to 20 (MIIVAHVLLILLGATEILQA) are cleaved as a signal peptide. The Extracellular portion of the chain corresponds to 21–342 (DLLPDEKISL…NDEHKPLREW (322 aa)). The Fibronectin type-III 1 domain maps to 32–123 (PPVNFTIKVT…ASAELHAPPG (92 aa)). N-linked (GlcNAc...) asparagine glycosylation is found at Asn35 and Asn131. Cystine bridges form between Cys134/Cys155 and Cys182/Cys196. Residues Asn216 and Asn244 are each glycosylated (N-linked (GlcNAc...) asparagine). Residues 241 to 334 (PPLNVTAEIE…WSQPIYVGND (94 aa)) form the Fibronectin type-III 2 domain. Cys269 and Cys316 are disulfide-bonded. The WSXWS motif motif lies at 322–326 (WSEWS). The helical transmembrane segment at 343–362 (FVIVIMATICFILLILSLIC) threads the bilayer. Residues 363-420 (KICHLWIKLFPPIPAPKSNIKDLFVTTNYEKAGSSETEIEVICYIEKPGVETLEDSVF) are Cytoplasmic-facing. Positions 371–379 (LFPPIPAPK) match the Box 1 motif motif.

It belongs to the type I cytokine receptor family. Type 5 subfamily. Interacts with IL5. Interacts with CSF2RB. Interacts with JAK2. Interacts with SDCBP. Expressed on eosinophils and basophils.

The protein localises to the membrane. Cell surface receptor that plays an important role in the survival, differentiation, and chemotaxis of eosinophils. Acts by forming a heterodimeric receptor with CSF2RB subunit and subsequently binding to interleukin-5. In unstimulated conditions, interacts constitutively with JAK2. Heterodimeric receptor activation leads to JAK2 stimulation and subsequent activation of the JAK-STAT pathway. The protein is Interleukin-5 receptor subunit alpha (IL5RA) of Homo sapiens (Human).